We begin with the raw amino-acid sequence, 492 residues long: Bifunctional purine biosynthesis protein PurH (492 aa).

Positions 1-144 (MKKVILSVSD…KNFKHVTTIV (144 aa)) constitute an MGS-like domain.

This sequence belongs to the PurH family.

It catalyses the reaction (6R)-10-formyltetrahydrofolate + 5-amino-1-(5-phospho-beta-D-ribosyl)imidazole-4-carboxamide = 5-formamido-1-(5-phospho-D-ribosyl)imidazole-4-carboxamide + (6S)-5,6,7,8-tetrahydrofolate. It carries out the reaction IMP + H2O = 5-formamido-1-(5-phospho-D-ribosyl)imidazole-4-carboxamide. Its pathway is purine metabolism; IMP biosynthesis via de novo pathway; 5-formamido-1-(5-phospho-D-ribosyl)imidazole-4-carboxamide from 5-amino-1-(5-phospho-D-ribosyl)imidazole-4-carboxamide (10-formyl THF route): step 1/1. It participates in purine metabolism; IMP biosynthesis via de novo pathway; IMP from 5-formamido-1-(5-phospho-D-ribosyl)imidazole-4-carboxamide: step 1/1. This is Bifunctional purine biosynthesis protein PurH from Staphylococcus carnosus (strain TM300).